Consider the following 216-residue polypeptide: Small ribosomal subunit protein uS4 (216 aa).

An S4 RNA-binding domain is found at 111–175 (RRLQTQVLRL…SPLVSESHPE (65 aa)). A disordered region spans residues 194 to 216 (VAEAKQAKEKPPERGGRKRRGRR). Residues 198-208 (KQAKEKPPERG) show a composition bias toward basic and acidic residues.

Belongs to the universal ribosomal protein uS4 family. In terms of assembly, part of the 30S ribosomal subunit. Contacts protein S5. The interaction surface between S4 and S5 is involved in control of translational fidelity.

Its function is as follows. One of the primary rRNA binding proteins, it binds directly to 16S rRNA where it nucleates assembly of the body of the 30S subunit. Functionally, with S5 and S12 plays an important role in translational accuracy. This chain is Small ribosomal subunit protein uS4, found in Methanosarcina barkeri (strain Fusaro / DSM 804).